Reading from the N-terminus, the 436-residue chain is Gamma-glutamyl phosphate reductase (436 aa).

This sequence belongs to the gamma-glutamyl phosphate reductase family.

It localises to the cytoplasm. The enzyme catalyses L-glutamate 5-semialdehyde + phosphate + NADP(+) = L-glutamyl 5-phosphate + NADPH + H(+). Its pathway is amino-acid biosynthesis; L-proline biosynthesis; L-glutamate 5-semialdehyde from L-glutamate: step 2/2. Its function is as follows. Catalyzes the NADPH-dependent reduction of L-glutamate 5-phosphate into L-glutamate 5-semialdehyde and phosphate. The product spontaneously undergoes cyclization to form 1-pyrroline-5-carboxylate. The sequence is that of Gamma-glutamyl phosphate reductase from Prochlorococcus marinus (strain SARG / CCMP1375 / SS120).